A 239-amino-acid chain; its full sequence is MKNDVISPEFDENGRPLRRIRSFVRRQGRLTKGQEHALENYWPVMGVEFSEDMLDFPALFGREAPVTLEIGFGMGASLVAMAKDRPEQDFLGIEVHSPGVGACLSSAHEEGLSNLRVMCHDAVEVLHKMIPDNSLRMVQLFFPDPWHKARHNKRRIVQVPFAELVKSKLQLGGIFHMATDWEPYAEHMLEVMSSIDGYKNLSESNDYVPRPASRPVTKFEQRGHRLGHGVWDLMFERVK.

S-adenosyl-L-methionine-binding residues include Glu-69, Glu-94, Asp-121, and Asp-144. Residue Asp-144 is part of the active site. Lys-148 provides a ligand contact to substrate. Positions 150-155 (RHNKRR) are interaction with RNA. Residues Asp-180 and 217–220 (TKFE) each bind substrate.

It belongs to the class I-like SAM-binding methyltransferase superfamily. TrmB family. In terms of assembly, monomer.

The catalysed reaction is guanosine(46) in tRNA + S-adenosyl-L-methionine = N(7)-methylguanosine(46) in tRNA + S-adenosyl-L-homocysteine. The protein operates within tRNA modification; N(7)-methylguanine-tRNA biosynthesis. Its function is as follows. Catalyzes the formation of N(7)-methylguanine at position 46 (m7G46) in tRNA. This is tRNA (guanine-N(7)-)-methyltransferase from Escherichia coli O6:H1 (strain CFT073 / ATCC 700928 / UPEC).